A 271-amino-acid polypeptide reads, in one-letter code: ATP synthase subunit a (271 aa).

The next 5 membrane-spanning stretches (helical) occupy residues 38-58 (FWTL…LFLL), 100-120 (LIAP…LMDL), 146-166 (DVNI…FYSI), 220-240 (LIFI…LNVP), and 242-262 (AIFH…LTIV).

The protein belongs to the ATPase A chain family. F-type ATPases have 2 components, CF(1) - the catalytic core - and CF(0) - the membrane proton channel. CF(1) has five subunits: alpha(3), beta(3), gamma(1), delta(1), epsilon(1). CF(0) has three main subunits: a(1), b(2) and c(9-12). The alpha and beta chains form an alternating ring which encloses part of the gamma chain. CF(1) is attached to CF(0) by a central stalk formed by the gamma and epsilon chains, while a peripheral stalk is formed by the delta and b chains.

It localises to the cell inner membrane. Key component of the proton channel; it plays a direct role in the translocation of protons across the membrane. This Citrobacter koseri (strain ATCC BAA-895 / CDC 4225-83 / SGSC4696) protein is ATP synthase subunit a.